A 755-amino-acid polypeptide reads, in one-letter code: Protein MTSS 1 (755 aa).

An IMD domain is found at 1 to 250; it reads MEAVIEKECS…EQVILDLKGS (250 aa). Residues 108–155 are a coiled coil; sequence LQEQMEEWKKVANQLDKDHAKEYKKARQEIKKKSSDTLKLQKKAKKGR. Disordered stretches follow at residues 139–159 and 255–305; these read KKSS…GDIQ and SYQT…RSSN. Threonine 258 bears the Phosphothreonine mark. Serine 261, serine 262, serine 271, and serine 322 each carry phosphoserine. Positions 327–351 are disordered; it reads QDAFQSKSPSPMPPEAPNQLSNGFS. Threonine 425 bears the Phosphothreonine mark. Disordered stretches follow at residues 428 to 470, 490 to 513, and 563 to 755; these read RRKE…TRPG, DTQR…TTPC, and QAKR…PRFS. Over residues 443 to 453 the composition is skewed to low complexity; the sequence is TTASGPPAAAE. Threonine 603 is subject to Phosphothreonine. Over residues 608–623 the composition is skewed to low complexity; the sequence is PIPIKTPVIPVKTPTV. A phosphoserine mark is found at serine 644 and serine 647. Positions 656-671 are enriched in polar residues; sequence GVTSMPSSMWSGQASV. One can recognise a WH2 domain in the interval 727-744; it reads QGEDMLNAIRRGVKLKKT.

It belongs to the MTSS family. As to quaternary structure, binds to actin. Binds to the cytoplasmic domain of receptor protein tyrosine phosphatase delta. As to expression, expressed in many tissues, including spleen, thymus, prostate, testis, uterus, colon, and peripheral blood.

The protein localises to the cytoplasm. It is found in the cytoskeleton. Its function is as follows. May be related to cancer progression or tumor metastasis in a variety of organ sites, most likely through an interaction with the actin cytoskeleton. The polypeptide is Protein MTSS 1 (Homo sapiens (Human)).